The primary structure comprises 369 residues: Anhydro-N-acetylmuramic acid kinase (369 aa).

An ATP-binding site is contributed by 12–19 (GTSMDGVD).

This sequence belongs to the anhydro-N-acetylmuramic acid kinase family.

The enzyme catalyses 1,6-anhydro-N-acetyl-beta-muramate + ATP + H2O = N-acetyl-D-muramate 6-phosphate + ADP + H(+). The protein operates within amino-sugar metabolism; 1,6-anhydro-N-acetylmuramate degradation. It functions in the pathway cell wall biogenesis; peptidoglycan recycling. Its function is as follows. Catalyzes the specific phosphorylation of 1,6-anhydro-N-acetylmuramic acid (anhMurNAc) with the simultaneous cleavage of the 1,6-anhydro ring, generating MurNAc-6-P. Is required for the utilization of anhMurNAc either imported from the medium or derived from its own cell wall murein, and thus plays a role in cell wall recycling. The chain is Anhydro-N-acetylmuramic acid kinase from Shewanella sp. (strain W3-18-1).